Reading from the N-terminus, the 416-residue chain is Ribulose bisphosphate carboxylase large chain (416 aa).

Substrate contacts are provided by asparagine 102 and threonine 152. Lysine 154 (proton acceptor) is an active-site residue. Residue lysine 156 coordinates substrate. Positions 180, 182, and 183 each coordinate Mg(2+). An N6-carboxylysine modification is found at lysine 180. The active-site Proton acceptor is histidine 273. Arginine 274, histidine 306, and serine 358 together coordinate substrate.

Belongs to the RuBisCO large chain family. Type I subfamily. As to quaternary structure, heterohexadecamer of 8 large chains and 8 small chains; disulfide-linked. The disulfide link is formed within the large subunit homodimers. The cofactor is Mg(2+). The disulfide bond which can form in the large chain dimeric partners within the hexadecamer appears to be associated with oxidative stress and protein turnover.

It localises to the plastid. Its subcellular location is the chloroplast. The enzyme catalyses 2 (2R)-3-phosphoglycerate + 2 H(+) = D-ribulose 1,5-bisphosphate + CO2 + H2O. It catalyses the reaction D-ribulose 1,5-bisphosphate + O2 = 2-phosphoglycolate + (2R)-3-phosphoglycerate + 2 H(+). In terms of biological role, ruBisCO catalyzes two reactions: the carboxylation of D-ribulose 1,5-bisphosphate, the primary event in carbon dioxide fixation, as well as the oxidative fragmentation of the pentose substrate in the photorespiration process. Both reactions occur simultaneously and in competition at the same active site. This is Ribulose bisphosphate carboxylase large chain (rbcL) from Arthropteris beckleri (Fern).